The primary structure comprises 548 residues: Membrane protein insertase YidC (548 aa).

The helical transmembrane segment at 6–26 threads the bilayer; the sequence is NLLVIALLFVSFMIWQAWEQD. The interval 28-56 is disordered; the sequence is NPQPQTQQTTQTTTTAAGSAADQGVPASG. Positions 29-42 are enriched in low complexity; sequence PQPQTQQTTQTTTT. The next 4 membrane-spanning stretches (helical) occupy residues 350-370, 424-444, 458-478, and 499-519; these read FVGN…GIMY, FPLI…MGSI, LSAQ…MFFI, and PVIF…YYIV.

The protein belongs to the OXA1/ALB3/YidC family. Type 1 subfamily. Interacts with the Sec translocase complex via SecD. Specifically interacts with transmembrane segments of nascent integral membrane proteins during membrane integration.

Its subcellular location is the cell inner membrane. In terms of biological role, required for the insertion and/or proper folding and/or complex formation of integral membrane proteins into the membrane. Involved in integration of membrane proteins that insert both dependently and independently of the Sec translocase complex, as well as at least some lipoproteins. Aids folding of multispanning membrane proteins. This chain is Membrane protein insertase YidC, found in Salmonella heidelberg (strain SL476).